A 102-amino-acid polypeptide reads, in one-letter code: Glutaredoxin-C13 (102 aa).

The 101-residue stretch at methionine 1 to leucine 101 folds into the Glutaredoxin domain. The cysteines at positions 21 and 24 are disulfide-linked.

It belongs to the glutaredoxin family. CC-type subfamily.

The protein resides in the cytoplasm. Functionally, has a glutathione-disulfide oxidoreductase activity in the presence of NADPH and glutathione reductase. Reduces low molecular weight disulfides and proteins. This chain is Glutaredoxin-C13 (GRXC13), found in Arabidopsis thaliana (Mouse-ear cress).